Consider the following 231-residue polypeptide: Octanoyl-[acyl-carrier-protein]:protein N-octanoyltransferase LIPT2, mitochondrial (231 aa).

In terms of domain architecture, BPL/LPL catalytic spans 41 to 224 (GTKAGVLLVC…AFKETFKCTL (184 aa)). Lys43 carries the post-translational modification N6-succinyllysine. Substrate is bound by residues 85–92 (RGGLATFH), 154–156 (AIG), and 167–169 (GLA). The active-site Acyl-thioester intermediate is Cys185.

This sequence belongs to the LipB family.

It localises to the mitochondrion. It carries out the reaction octanoyl-[ACP] + L-lysyl-[protein] = N(6)-octanoyl-L-lysyl-[protein] + holo-[ACP] + H(+). It participates in protein modification; protein lipoylation via endogenous pathway; protein N(6)-(lipoyl)lysine from octanoyl-[acyl-carrier-protein]: step 1/2. Functionally, catalyzes the transfer of endogenously produced octanoic acid from octanoyl-acyl-carrier-protein onto the lipoyl domains of lipoate-dependent enzymes such as the protein H of the glycine cleavage system (GCSH). Lipoyl-ACP can also act as a substrate although octanoyl-ACP is likely to be the physiological substrate. In Mus musculus (Mouse), this protein is Octanoyl-[acyl-carrier-protein]:protein N-octanoyltransferase LIPT2, mitochondrial.